The sequence spans 72 residues: Large ribosomal subunit protein uL29 (72 aa).

This sequence belongs to the universal ribosomal protein uL29 family.

This Chlamydia pneumoniae (Chlamydophila pneumoniae) protein is Large ribosomal subunit protein uL29 (rpmC).